The following is a 353-amino-acid chain: Photosystem II D2 protein (353 aa).

Thr2 bears the N-acetylthreonine mark. A Phosphothreonine modification is found at Thr2. A helical membrane pass occupies residues 41 to 61; that stretch reads CAYFALGGWFTGTTFVTSWYT. Chlorophyll a is bound at residue His118. Residues 125 to 141 traverse the membrane as a helical segment; the sequence is GFMLRQFEIARSVQLRP. Pheophytin a is bound by residues Gln130 and Asn143. The helical transmembrane segment at 153–166 threads the bilayer; sequence VFVSVFLIYPLGQS. His198 provides a ligand contact to chlorophyll a. Residues 208–228 form a helical membrane-spanning segment; that stretch reads AALLCAIHGATVENTLFEDGD. Positions 215 and 262 each coordinate a plastoquinone. His215 provides a ligand contact to Fe cation. His269 serves as a coordination point for Fe cation. A helical membrane pass occupies residues 279–295; that stretch reads GLWMSALGVVGLALNLR.

Belongs to the reaction center PufL/M/PsbA/D family. In terms of assembly, PSII is composed of 1 copy each of membrane proteins PsbA, PsbB, PsbC, PsbD, PsbE, PsbF, PsbH, PsbI, PsbJ, PsbK, PsbL, PsbM, PsbT, PsbX, PsbY, PsbZ, Psb30/Ycf12, at least 3 peripheral proteins of the oxygen-evolving complex and a large number of cofactors. It forms dimeric complexes. The cofactor is The D1/D2 heterodimer binds P680, chlorophylls that are the primary electron donor of PSII, and subsequent electron acceptors. It shares a non-heme iron and each subunit binds pheophytin, quinone, additional chlorophylls, carotenoids and lipids. There is also a Cl(-1) ion associated with D1 and D2, which is required for oxygen evolution. The PSII complex binds additional chlorophylls, carotenoids and specific lipids..

The protein resides in the plastid. The protein localises to the chloroplast thylakoid membrane. It catalyses the reaction 2 a plastoquinone + 4 hnu + 2 H2O = 2 a plastoquinol + O2. Functionally, photosystem II (PSII) is a light-driven water:plastoquinone oxidoreductase that uses light energy to abstract electrons from H(2)O, generating O(2) and a proton gradient subsequently used for ATP formation. It consists of a core antenna complex that captures photons, and an electron transfer chain that converts photonic excitation into a charge separation. The D1/D2 (PsbA/PsbD) reaction center heterodimer binds P680, the primary electron donor of PSII as well as several subsequent electron acceptors. D2 is needed for assembly of a stable PSII complex. In Oenothera argillicola (Appalachian evening primrose), this protein is Photosystem II D2 protein.